The following is a 976-amino-acid chain: Vacuolar membrane protease (976 aa).

Residues Met-1 to Pro-51 are Cytoplasmic-facing. Residues Trp-52–Val-72 form a helical membrane-spanning segment. The Vacuolar portion of the chain corresponds to His-73–Asn-399. N-linked (GlcNAc...) asparagine glycans are attached at residues Asn-147 and Asn-150. 2 residues coordinate Zn(2+): His-206 and Asp-218. Glu-252 serves as the catalytic Proton acceptor. Zn(2+) is bound by residues Glu-253, Glu-278, and His-351. The chain crosses the membrane as a helical span at residues Gly-400 to Leu-420. Over Asn-421–Ser-427 the chain is Cytoplasmic. Residues Val-428–Leu-448 traverse the membrane as a helical segment. At Asp-449–Arg-477 the chain is on the vacuolar side. Residues Phe-478–Lys-498 traverse the membrane as a helical segment. Over Ala-499–Arg-519 the chain is Cytoplasmic. The helical transmembrane segment at Ala-520–Tyr-540 threads the bilayer. The Vacuolar segment spans residues Gln-541–Tyr-550. Residues Phe-551 to Phe-571 traverse the membrane as a helical segment. Residues Gly-572–Asn-675 are Cytoplasmic-facing. Positions Thr-590–Leu-633 are disordered. The segment covering Pro-618–Thr-627 has biased composition (acidic residues). The chain crosses the membrane as a helical span at residues Leu-676–Leu-696. The Vacuolar portion of the chain corresponds to Gly-697–Leu-718. A helical transmembrane segment spans residues Val-719 to Ile-739. The Cytoplasmic portion of the chain corresponds to His-740–His-745. A helical transmembrane segment spans residues Ile-746 to Pro-766. At Phe-767–Leu-976 the chain is on the vacuolar side. The N-linked (GlcNAc...) asparagine glycan is linked to Asn-848.

Belongs to the peptidase M28 family. Requires Zn(2+) as cofactor.

The protein localises to the vacuole membrane. In terms of biological role, may be involved in vacuolar sorting and osmoregulation. The sequence is that of Vacuolar membrane protease from Arthroderma otae (strain ATCC MYA-4605 / CBS 113480) (Microsporum canis).